Consider the following 428-residue polypeptide: Enolase (428 aa).

Gln162 contacts (2R)-2-phosphoglycerate. Glu204 (proton donor) is an active-site residue. Positions 241, 282, and 309 each coordinate Mg(2+). Residues Lys334, Arg363, Ser364, and Lys385 each contribute to the (2R)-2-phosphoglycerate site. Lys334 acts as the Proton acceptor in catalysis.

The protein belongs to the enolase family. Mg(2+) serves as cofactor.

It localises to the cytoplasm. The protein localises to the secreted. Its subcellular location is the cell surface. It catalyses the reaction (2R)-2-phosphoglycerate = phosphoenolpyruvate + H2O. It functions in the pathway carbohydrate degradation; glycolysis; pyruvate from D-glyceraldehyde 3-phosphate: step 4/5. In terms of biological role, catalyzes the reversible conversion of 2-phosphoglycerate (2-PG) into phosphoenolpyruvate (PEP). It is essential for the degradation of carbohydrates via glycolysis. This Mycobacterium marinum (strain ATCC BAA-535 / M) protein is Enolase.